The chain runs to 322 residues: Ferric-anguibactin-binding protein FatB (322 aa).

Positions 1–22 (MFKSTLNIAVAIVCSSLVTLTG) are cleaved as a signal peptide. Cys23 is lipidated: N-palmitoyl cysteine. A lipid anchor (S-diacylglycerol cysteine) is attached at Cys23. A Fe/B12 periplasmic-binding domain is found at 57–322 (RVAALDMNEV…IDDIIKGYQS (266 aa)).

This sequence belongs to the bacterial solute-binding protein 8 family. Part of an iron transport system composed of the outer membrane receptor FatA, the periplasmic binding protein FatB and the inner membrane proteins FatC and FatD.

The protein localises to the cell inner membrane. In terms of biological role, involved in the uptake of iron in complex with the siderophore anguibactin. Binds ferric-anguibactin in the periplasm and mediates its transport into the cytoplasm. The chain is Ferric-anguibactin-binding protein FatB from Vibrio anguillarum (strain ATCC 68554 / 775) (Listonella anguillarum).